A 262-amino-acid polypeptide reads, in one-letter code: Protein Pcal_0062 (262 aa).

The protein belongs to the CinA family.

This chain is Protein Pcal_0062, found in Pyrobaculum calidifontis (strain DSM 21063 / JCM 11548 / VA1).